A 240-amino-acid chain; its full sequence is ATP synthase subunit a (240 aa).

Transmembrane regions (helical) follow at residues 21 to 41 (LSNL…CVWG), 78 to 98 (IFLP…LIGV), 116 to 136 (DAVM…YYGI), 183 to 203 (ILLS…FGAA), and 212 to 232 (FSVF…MVYM).

Belongs to the ATPase A chain family. As to quaternary structure, F-type ATPases have 2 components, CF(1) - the catalytic core - and CF(0) - the membrane proton channel. CF(1) has five subunits: alpha(3), beta(3), gamma(1), delta(1), epsilon(1). CF(0) has three main subunits: a(1), b(2) and c(9-12). The alpha and beta chains form an alternating ring which encloses part of the gamma chain. CF(1) is attached to CF(0) by a central stalk formed by the gamma and epsilon chains, while a peripheral stalk is formed by the delta and b chains.

It is found in the cell membrane. Its function is as follows. Key component of the proton channel; it plays a direct role in the translocation of protons across the membrane. The sequence is that of ATP synthase subunit a from Oceanobacillus iheyensis (strain DSM 14371 / CIP 107618 / JCM 11309 / KCTC 3954 / HTE831).